The chain runs to 134 residues: Fatty acid-binding protein, muscle (134 aa).

Residues arginine 109 and 129 to 131 (RIY) contribute to the (9Z)-octadecenoate site.

Belongs to the calycin superfamily. Fatty-acid binding protein (FABP) family. In terms of assembly, monomer. In terms of tissue distribution, adult flight muscle.

Its subcellular location is the cytoplasm. Its function is as follows. Binds fatty acids in a 1:1 molar ratio. The protein is Fatty acid-binding protein, muscle of Schistocerca gregaria (Desert locust).